Reading from the N-terminus, the 486-residue chain is Glutamyl-tRNA(Gln) amidotransferase subunit A (486 aa).

Active-site charge relay system residues include Lys74 and Ser149. The Acyl-ester intermediate role is filled by Ser173.

The protein belongs to the amidase family. GatA subfamily. As to quaternary structure, heterotrimer of A, B and C subunits.

It catalyses the reaction L-glutamyl-tRNA(Gln) + L-glutamine + ATP + H2O = L-glutaminyl-tRNA(Gln) + L-glutamate + ADP + phosphate + H(+). In terms of biological role, allows the formation of correctly charged Gln-tRNA(Gln) through the transamidation of misacylated Glu-tRNA(Gln) in organisms which lack glutaminyl-tRNA synthetase. The reaction takes place in the presence of glutamine and ATP through an activated gamma-phospho-Glu-tRNA(Gln). The protein is Glutamyl-tRNA(Gln) amidotransferase subunit A of Prochlorococcus marinus (strain SARG / CCMP1375 / SS120).